Here is an 807-residue protein sequence, read N- to C-terminus: Tyrosine-protein phosphatase non-receptor type 22 (807 aa).

The Tyrosine-protein phosphatase domain maps to Phe-24–Leu-289. Position 35 is a phosphoserine; by PKC/PRKCD (Ser-35). An intrachain disulfide couples Cys-129 to Cys-227. The Phosphocysteine intermediate role is filled by Cys-227. Substrate contacts are provided by residues Cys-227 to Arg-233 and Gln-274. Phosphoserine is present on residues Ser-449, Ser-635, Ser-684, and Ser-692. 2 disordered regions span residues Ser-676–Arg-700 and Ser-724–Phe-746.

It belongs to the protein-tyrosine phosphatase family. Non-receptor class 4 subfamily. As to quaternary structure, interacts with CSK. Interacts with LPXN. Interacts with CBL. Interacts with TRAF3 (via MATH domain); the interaction promotes TRAF3 polyubiquitination. Phosphorylation on Ser-35 by PKC/PRKCD abrogates its ability to dephosphorylate and inactivate the SRC family kinases. In terms of tissue distribution, expressed in bone marrow, B and T-cells, PBMCs, natural killer cells, monocytes, dendritic cells and neutrophils. Both isoform 1 and 4 are predominantly expressed in lymphoid tissues and cells. Isoform 1 is expressed in thymocytes and both mature B and T-cells.

It is found in the cytoplasm. It carries out the reaction O-phospho-L-tyrosyl-[protein] + H2O = L-tyrosyl-[protein] + phosphate. The enzyme catalyses N-(5Z,8Z,11Z,14Z-eicosatetraenoyl)-ethanolamine phosphate + H2O = N-(5Z,8Z,11Z,14Z-eicosatetraenoyl)-ethanolamine + phosphate. Its activity is regulated as follows. Down-regulated by phosphorylation. Functionally, acts as a negative regulator of T-cell receptor (TCR) signaling by direct dephosphorylation of the Src family kinases LCK and FYN, ITAMs of the TCRz/CD3 complex, as well as ZAP70, VAV, VCP and other key signaling molecules. Associates with and probably dephosphorylates CBL. Dephosphorylates LCK at its activating 'Tyr-394' residue. Dephosphorylates ZAP70 at its activating 'Tyr-493' residue. Dephosphorylates the immune system activator SKAP2. Positively regulates toll-like receptor (TLR)-induced type 1 interferon production. Promotes host antiviral responses mediated by type 1 interferon. Regulates NOD2-induced pro-inflammatory cytokine secretion and autophagy. Acts as an activator of NLRP3 inflammasome assembly by mediating dephosphorylation of 'Tyr-861' of NLRP3. Dephosphorylates phospho-anandamide (p-AEA), an endocannabinoid to anandamide (also called N-arachidonoylethanolamide). This Homo sapiens (Human) protein is Tyrosine-protein phosphatase non-receptor type 22 (PTPN22).